Here is a 439-residue protein sequence, read N- to C-terminus: Lactamase-like protein nscB (439 aa).

Positions 214, 216, 218, and 219 each coordinate Zn(2+). The active-site Proton donor/acceptor is the Asp218.

Belongs to the metallo-beta-lactamase superfamily. It depends on Zn(2+) as a cofactor.

It participates in secondary metabolite biosynthesis. In terms of biological role, lactamase-like protein; part of the gene cluster that mediates the biosynthesis of neosartoricin B, a prenylated anthracenone that probably exhibits T-cell antiproliferative activity, suggestive of a physiological role as an immunosuppressive agent. The non-reducing polyketide synthase nscA probably synthesizes and cyclizes the decaketide backbone. The hydrolase nscB then mediates the product release through hydrolysis followed by spontaneous decarboxylation. The prenyltransferase nscD catalyzes the addition of the dimethylallyl group to the aromatic C5. The FAD-dependent monooxygenase nscC is then responsible for the stereospecific hydroxylation at C2. Neosartoricin B can be converted into two additional compounds neosartoricins C and D. Neosartoricin C is a spirocyclic compound that is cyclized through the attack of C3 hydroxyl on C14, followed by dehydration. On the other hand, neosartoricin D is a further cyclized compound in which attack of C2 on C14 in neosartoricin C results in the formation of the acetal-containing dioxabicyclo-octanone ring. Both of these compounds are novel and possibly represent related metabolites of the gene cluster. The chain is Lactamase-like protein nscB from Arthroderma benhamiae (strain ATCC MYA-4681 / CBS 112371) (Trichophyton mentagrophytes).